Consider the following 409-residue polypeptide: Elongation factor Tu, chloroplastic (409 aa).

Positions 10–214 (KPHVNIGTIG…AVDTYIPTPE (205 aa)) constitute a tr-type G domain. The interval 19 to 26 (GHVDHGKT) is G1. Residue 19-26 (GHVDHGKT) participates in GTP binding. Residue T26 coordinates Mg(2+). The segment at 60–64 (GITIN) is G2. The interval 81 to 84 (DCPG) is G3. Residues 81–85 (DCPGH) and 136–139 (NKED) each bind GTP. A G4 region spans residues 136 to 139 (NKED). Residues 174–176 (SAL) form a G5 region.

This sequence belongs to the TRAFAC class translation factor GTPase superfamily. Classic translation factor GTPase family. EF-Tu/EF-1A subfamily.

The protein localises to the plastid. The protein resides in the chloroplast. The enzyme catalyses GTP + H2O = GDP + phosphate + H(+). GTP hydrolase that promotes the GTP-dependent binding of aminoacyl-tRNA to the A-site of ribosomes during protein biosynthesis. The protein is Elongation factor Tu, chloroplastic (tufA) of Pyropia yezoensis (Susabi-nori).